The chain runs to 134 residues: Arsenate reductase (134 aa).

Catalysis depends on nucleophile residues Cys11, Cys83, and Cys90. Intrachain disulfides connect Cys11–Cys83 and Cys83–Cys90.

Belongs to the low molecular weight phosphotyrosine protein phosphatase family. Thioredoxin-coupled ArsC subfamily.

The protein resides in the cytoplasm. The catalysed reaction is arsenate + [thioredoxin]-dithiol + H(+) = arsenite + [thioredoxin]-disulfide + H2O. Its function is as follows. Catalyzes the reduction of arsenate [As(V)] to arsenite [As(III)]. This Bacillus cereus (strain ZK / E33L) protein is Arsenate reductase.